Consider the following 599-residue polypeptide: Elongation factor 4 (599 aa).

Residues 5 to 187 enclose the tr-type G domain; it reads SHIRNFSIIA…RLVHTIPAPE (183 aa). Residues 17–22 and 134–137 contribute to the GTP site; these read DHGKST and NKMD.

Belongs to the TRAFAC class translation factor GTPase superfamily. Classic translation factor GTPase family. LepA subfamily.

Its subcellular location is the cell inner membrane. The catalysed reaction is GTP + H2O = GDP + phosphate + H(+). In terms of biological role, required for accurate and efficient protein synthesis under certain stress conditions. May act as a fidelity factor of the translation reaction, by catalyzing a one-codon backward translocation of tRNAs on improperly translocated ribosomes. Back-translocation proceeds from a post-translocation (POST) complex to a pre-translocation (PRE) complex, thus giving elongation factor G a second chance to translocate the tRNAs correctly. Binds to ribosomes in a GTP-dependent manner. The chain is Elongation factor 4 from Pseudomonas putida (strain ATCC 47054 / DSM 6125 / CFBP 8728 / NCIMB 11950 / KT2440).